We begin with the raw amino-acid sequence, 200 residues long: Holliday junction branch migration complex subunit RuvA (200 aa).

A domain I region spans residues 1–63 (MIGKLSGKID…EEHIHLYGFL (63 aa)). Positions 64 to 142 (TLEEKNFFNL…KIFSSSAIIK (79 aa)) are domain II. The tract at residues 142 to 146 (KDSSN) is flexible linker. The segment at 147–200 (ISSVEINEVIKALVNLGFTRFEAQNTVQGIITQNTKISIDELIKTALKNRNSSF) is domain III.

The protein belongs to the RuvA family. As to quaternary structure, homotetramer. Forms an RuvA(8)-RuvB(12)-Holliday junction (HJ) complex. HJ DNA is sandwiched between 2 RuvA tetramers; dsDNA enters through RuvA and exits via RuvB. An RuvB hexamer assembles on each DNA strand where it exits the tetramer. Each RuvB hexamer is contacted by two RuvA subunits (via domain III) on 2 adjacent RuvB subunits; this complex drives branch migration. In the full resolvosome a probable DNA-RuvA(4)-RuvB(12)-RuvC(2) complex forms which resolves the HJ.

It is found in the cytoplasm. In terms of biological role, the RuvA-RuvB-RuvC complex processes Holliday junction (HJ) DNA during genetic recombination and DNA repair, while the RuvA-RuvB complex plays an important role in the rescue of blocked DNA replication forks via replication fork reversal (RFR). RuvA specifically binds to HJ cruciform DNA, conferring on it an open structure. The RuvB hexamer acts as an ATP-dependent pump, pulling dsDNA into and through the RuvAB complex. HJ branch migration allows RuvC to scan DNA until it finds its consensus sequence, where it cleaves and resolves the cruciform DNA. The sequence is that of Holliday junction branch migration complex subunit RuvA from Rickettsia typhi (strain ATCC VR-144 / Wilmington).